The following is a 117-amino-acid chain: DNA-directed RNA polymerase subunit omega (117 aa).

This sequence belongs to the RNA polymerase subunit omega family. As to quaternary structure, the RNAP catalytic core consists of 2 alpha, 1 beta, 1 beta' and 1 omega subunit. When a sigma factor is associated with the core the holoenzyme is formed, which can initiate transcription.

The catalysed reaction is RNA(n) + a ribonucleoside 5'-triphosphate = RNA(n+1) + diphosphate. Functionally, promotes RNA polymerase assembly. Latches the N- and C-terminal regions of the beta' subunit thereby facilitating its interaction with the beta and alpha subunits. This chain is DNA-directed RNA polymerase subunit omega, found in Ruegeria sp. (strain TM1040) (Silicibacter sp.).